Here is a 393-residue protein sequence, read N- to C-terminus: NAD(P)H-quinone oxidoreductase subunit H, chloroplastic (393 aa).

Belongs to the complex I 49 kDa subunit family. In terms of assembly, NDH is composed of at least 16 different subunits, 5 of which are encoded in the nucleus.

It is found in the plastid. The protein localises to the chloroplast thylakoid membrane. The enzyme catalyses a plastoquinone + NADH + (n+1) H(+)(in) = a plastoquinol + NAD(+) + n H(+)(out). It catalyses the reaction a plastoquinone + NADPH + (n+1) H(+)(in) = a plastoquinol + NADP(+) + n H(+)(out). Functionally, NDH shuttles electrons from NAD(P)H:plastoquinone, via FMN and iron-sulfur (Fe-S) centers, to quinones in the photosynthetic chain and possibly in a chloroplast respiratory chain. The immediate electron acceptor for the enzyme in this species is believed to be plastoquinone. Couples the redox reaction to proton translocation, and thus conserves the redox energy in a proton gradient. The protein is NAD(P)H-quinone oxidoreductase subunit H, chloroplastic of Solanum bulbocastanum (Wild potato).